Consider the following 20-residue polypeptide: Antifungal protein 2 large subunit (20 aa).

A disordered region spans residues 1–20; that stretch reads PEDPQRRYQEXQREXRXQQE.

Heterodimer of a large and a small subunit.

Possesses antifungal activity against P.infestans but not F.graminearum. This chain is Antifungal protein 2 large subunit, found in Malva parviflora (Little mallow).